A 394-amino-acid polypeptide reads, in one-letter code: Na(+)/H(+) antiporter NhaA (394 aa).

Helical transmembrane passes span Ala14–Leu34, Leu59–Val79, Val95–Phe115, Gly125–Gly145, Val154–Phe174, Val179–Trp199, Leu213–Val233, Gly254–Val274, Ile292–Val312, Ile328–Leu348, and Leu363–Val383.

It belongs to the NhaA Na(+)/H(+) (TC 2.A.33) antiporter family.

It localises to the cell inner membrane. The catalysed reaction is Na(+)(in) + 2 H(+)(out) = Na(+)(out) + 2 H(+)(in). Functionally, na(+)/H(+) antiporter that extrudes sodium in exchange for external protons. The sequence is that of Na(+)/H(+) antiporter NhaA from Yersinia pestis bv. Antiqua (strain Antiqua).